A 232-amino-acid chain; its full sequence is UPF0758 protein FN0909 (232 aa).

The 123-residue stretch at K110 to I232 folds into the MPN domain. Residues H181, H183, and D194 each contribute to the Zn(2+) site. The JAMM motif motif lies at H181–D194.

Belongs to the UPF0758 family.

This is UPF0758 protein FN0909 from Fusobacterium nucleatum subsp. nucleatum (strain ATCC 25586 / DSM 15643 / BCRC 10681 / CIP 101130 / JCM 8532 / KCTC 2640 / LMG 13131 / VPI 4355).